Reading from the N-terminus, the 464-residue chain is Trigger factor (464 aa).

The 82-residue stretch at 162-243 (GDFISIDLSA…VGTVKERELP (82 aa)) folds into the PPIase FKBP-type domain. The segment at 428–464 (GASVDTAELFGNGEADTEEAASTDEVASDSAEGEDQK) is disordered.

This sequence belongs to the FKBP-type PPIase family. Tig subfamily.

It is found in the cytoplasm. It carries out the reaction [protein]-peptidylproline (omega=180) = [protein]-peptidylproline (omega=0). Functionally, involved in protein export. Acts as a chaperone by maintaining the newly synthesized protein in an open conformation. Functions as a peptidyl-prolyl cis-trans isomerase. This chain is Trigger factor, found in Rhodococcus opacus (strain B4).